The chain runs to 488 residues: H2.0-like homeobox protein (488 aa).

2 disordered regions span residues 118–173 (AYHH…SSKD) and 331–488 (WRHS…LGCL). Low complexity-rich tracts occupy residues 125 to 135 (QQQQQQQQPQQ) and 158 to 171 (PNPHHSGSAPAPSS). The homeobox DNA-binding region spans 276 to 335 (RSWSRAVFSNLQRKGLEKRFEIQKYVTKPDRKQLAAMLGLTDAQVKVWFQNRRMKWRHSK). Composition is skewed to basic and acidic residues over residues 334–349 (SKEAQAQKDKDKEAGE) and 363–372 (DERSPSRSEG). A compositionally biased stretch (acidic residues) spans 373 to 383 (EAESESSDSES). Positions 390–401 (DTERTEGSERSL) are enriched in basic and acidic residues. Residues 422 to 432 (GSGGSSGGGGN) are compositionally biased toward gly residues. Positions 433 to 454 (SFSFSSASSLSSSSTSAGCASS) are enriched in low complexity.

Belongs to the H2.0 homeobox family. As to expression, low level in normal B and T-cells, high level in activated lymphocytes and monocytes. Also found in thymus, tonsil, bone marrow, developing vessels, and fetal brain.

The protein localises to the nucleus. Functionally, transcription factor required for TBX21/T-bet-dependent maturation of Th1 cells as well as maintenance of Th1-specific gene expression. Involved in embryogenesis and hematopoiesis. The sequence is that of H2.0-like homeobox protein (HLX) from Homo sapiens (Human).